We begin with the raw amino-acid sequence, 268 residues long: Activator of basal transcription 1 (268 aa).

The stretch at 6–38 (KLVEEQKAAMEEEKEVNAEAAEELEEAEEASCN) forms a coiled coil. The region spanning 47–144 (GIVYLGHVPP…RKRSPFRYDL (98 aa)) is the RRM domain. Residues 163-193 (AFERQVRRQRLRAEVAQAKRETDFYLRNVEQ) are a coiled coil. A disordered region spans residues 200–242 (ADGDATRPNSSWTFTQRPTEQELRAQKGARPGGRERARLATVQ). Residues 206–217 (RPNSSWTFTQRP) are compositionally biased toward polar residues.

The protein belongs to the ESF2/ABP1 family. As to quaternary structure, interacts with IGHMBP2. Interacts with ESF1/ABTAP.

It is found in the nucleus. It localises to the nucleolus. May be a novel TATA-binding protein (TBP) which can function as a basal transcription activator. Can act as a regulator of basal transcription for class II genes. The chain is Activator of basal transcription 1 (Abt1) from Rattus norvegicus (Rat).